The primary structure comprises 375 residues: Homoserine O-succinyltransferase (375 aa).

The AB hydrolase-1 domain occupies 48 to 358; sequence NAVLVCHALS…DAGHDSFLLD (311 aa). The Nucleophile role is filled by Ser-154. Arg-224 contacts substrate. Active-site residues include Asp-319 and His-352. A substrate-binding site is contributed by Asp-353.

Belongs to the AB hydrolase superfamily. MetX family. In terms of assembly, homodimer.

It is found in the cytoplasm. The catalysed reaction is L-homoserine + succinyl-CoA = O-succinyl-L-homoserine + CoA. Its pathway is amino-acid biosynthesis; L-methionine biosynthesis via de novo pathway; O-succinyl-L-homoserine from L-homoserine: step 1/1. Its function is as follows. Transfers a succinyl group from succinyl-CoA to L-homoserine, forming succinyl-L-homoserine. This Aromatoleum aromaticum (strain DSM 19018 / LMG 30748 / EbN1) (Azoarcus sp. (strain EbN1)) protein is Homoserine O-succinyltransferase.